The chain runs to 276 residues: Reaction center protein L chain (276 aa).

Helical transmembrane passes span 33–56, 85–113, and 116–141; these read GFFG…GAAL, GLWQ…RKLG, and YHIP…VMMG. (7R,8Z)-bacteriochlorophyll b-binding residues include H154 and H174. Residues 171–200 form a helical membrane-spanning segment; the sequence is NPAHMLGITLFFTTCLALALHGSLILSAAN. Position 191 (H191) interacts with Fe cation. Residue F217 participates in a ubiquinone binding. A helical transmembrane segment spans residues 226–252; sequence GTLGIHRVGLILALSAVVWSIICMILS. H231 provides a ligand contact to Fe cation.

This sequence belongs to the reaction center PufL/M/PsbA/D family. In terms of assembly, reaction center is composed of four bacteriochlorophylls, two bacteriopheophytins, two ubiquinones, one iron, and three highly hydrophobic polypeptide chains (designated L, M, and H).

It is found in the cellular chromatophore membrane. Functionally, the reaction center is a membrane-bound complex that mediates the initial photochemical event in the electron transfer process of photosynthesis. This chain is Reaction center protein L chain (pufL), found in Rhodospirillum rubrum.